Consider the following 483-residue polypeptide: Trimethylamine methyltransferase MttB (483 aa).

Pyl334 is a non-standard amino acid (pyrrolysine).

This sequence belongs to the trimethylamine methyltransferase family. Can form a complex with MttC.

The enzyme catalyses Co(I)-[trimethylamine-specific corrinoid protein] + trimethylamine + H(+) = methyl-Co(III)-[trimethylamine-specific corrinoid protein] + dimethylamine. Its pathway is one-carbon metabolism; methanogenesis from trimethylamine. Functionally, catalyzes the transfer of a methyl group from trimethylamine to the corrinoid cofactor of MttC. The protein is Trimethylamine methyltransferase MttB (mttB) of Methanosarcina thermophila.